The following is a 344-amino-acid chain: uncharacterized protein (344 aa).

This is an uncharacterized protein from Aquifex aeolicus (strain VF5).